Reading from the N-terminus, the 64-residue chain is SPbeta prophage-derived uncharacterized protein YoqI (64 aa).

The sequence is that of SPbeta prophage-derived uncharacterized protein YoqI (yoqI) from Bacillus subtilis (strain 168).